The following is a 1604-amino-acid chain: Ubiquitin carboxyl-terminal hydrolase 32 (1604 aa).

EF-hand domains follow at residues Lys91–Lys126, Ile228–Gly263, and Pro264–Val299. Residues Asp241, Asn243, Asp245, His247, Glu252, Asp277, Asp279, Asp281, and Glu288 each contribute to the Ca(2+) site. In terms of domain architecture, DUSP spans Ala369 to Ile585. A USP domain is found at Thr734–Gln1567. Cys743 (nucleophile) is an active-site residue. Tyr1173 bears the Phosphotyrosine mark. Ser1350 carries the post-translational modification Phosphoserine. The disordered stretch occupies residues Glu1353 to Glu1432. Polar residues predominate over residues Lys1360–Thr1370. Residues Ser1371–Pro1399 show a composition bias toward low complexity. Ser1372 and Ser1376 each carry phosphoserine. Over residues Gly1415–Lys1424 the composition is skewed to polar residues. Ser1454 is subject to Phosphoserine. The tract at residues Ser1484 to Thr1504 is disordered. A compositionally biased stretch (basic and acidic residues) spans His1491–Thr1504. His1526 functions as the Proton acceptor in the catalytic mechanism. Ser1588 is subject to Phosphoserine. Cys1601 bears the Cysteine methyl ester mark. The S-farnesyl cysteine moiety is linked to residue Cys1601. The propeptide at Val1602–Gln1604 is removed in mature form.

It belongs to the peptidase C19 family.

Its subcellular location is the golgi apparatus membrane. It catalyses the reaction Thiol-dependent hydrolysis of ester, thioester, amide, peptide and isopeptide bonds formed by the C-terminal Gly of ubiquitin (a 76-residue protein attached to proteins as an intracellular targeting signal).. Its function is as follows. Deubiquitinase that can remove conjugated ubiquitin from target proteins, such as RAB7A and LAMTOR1. Acts as a positive regulator of the mTORC1 signaling by mediating deubiquitination of LAMTOR1, thereby promoting the association between LAMTOR1 and the lysosomal V-ATPase complex and subsequent activation of the mTORC1 complex. The chain is Ubiquitin carboxyl-terminal hydrolase 32 from Mus musculus (Mouse).